The primary structure comprises 293 residues: Protease HtpX homolog (293 aa).

2 helical membrane passes run 4–24 (IFLF…TLRV) and 40–60 (SLLI…LLIS). Zn(2+) is bound at residue His-146. Glu-147 is an active-site residue. His-150 serves as a coordination point for Zn(2+). 2 helical membrane passes run 161-181 (LIQG…GYFI) and 197-217 (FITV…IVAW). Residue Glu-223 participates in Zn(2+) binding.

This sequence belongs to the peptidase M48B family. Requires Zn(2+) as cofactor.

It localises to the cell inner membrane. In Bordetella petrii (strain ATCC BAA-461 / DSM 12804 / CCUG 43448), this protein is Protease HtpX homolog.